Here is a 120-residue protein sequence, read N- to C-terminus: Ribonuclease P protein component (120 aa).

It belongs to the RnpA family. Consists of a catalytic RNA component (M1 or rnpB) and a protein subunit.

The catalysed reaction is Endonucleolytic cleavage of RNA, removing 5'-extranucleotides from tRNA precursor.. In terms of biological role, RNaseP catalyzes the removal of the 5'-leader sequence from pre-tRNA to produce the mature 5'-terminus. It can also cleave other RNA substrates such as 4.5S RNA. The protein component plays an auxiliary but essential role in vivo by binding to the 5'-leader sequence and broadening the substrate specificity of the ribozyme. The polypeptide is Ribonuclease P protein component (Thioalkalivibrio sulfidiphilus (strain HL-EbGR7)).